We begin with the raw amino-acid sequence, 440 residues long: Serine/threonine-protein kinase 2 (440 aa).

The Protein kinase domain maps to 85–440 (NDDFYHISTG…FSNWINGESC (356 aa)). ATP-binding positions include 91–99 (ISTGGYGIV) and Lys115. The active-site Proton acceptor is the Asp306.

Belongs to the protein kinase superfamily. Ser/Thr protein kinase family. Poxviruses subfamily. In terms of processing, phosphorylated in vivo. Autophosphorylated in vitro.

It is found in the host endoplasmic reticulum. Its subcellular location is the host endoplasmic reticulum-Golgi intermediate compartment. The catalysed reaction is L-seryl-[protein] + ATP = O-phospho-L-seryl-[protein] + ADP + H(+). The enzyme catalyses L-threonyl-[protein] + ATP = O-phospho-L-threonyl-[protein] + ADP + H(+). In terms of biological role, essential serine-protein kinase involved in the early stage of virion morphogenesis. The polypeptide is Serine/threonine-protein kinase 2 (OPG054) (Sus scrofa (Pig)).